The sequence spans 550 residues: Phosphatidylinositol 4-kinase gamma 2 (550 aa).

Ubiquitin-like domains follow at residues 34–111 and 112–190; these read SVLV…YDPL and LVTV…VEDT. The segment at 228-247 is disordered; the sequence is VDGLNKGSPPVRSAEGTGGT. Residues 234–532 form the PI3K/PI4K catalytic domain; sequence GSPPVRSAEG…SVLPASSEAT (299 aa). Residues 240-246 are G-loop; that stretch reads SAEGTGG. Residues 241-247, lysine 263, and 359-362 contribute to the ATP site; these read AEGTGGT and QMFM. Residues 392 to 400 form a catalytic loop region; the sequence is ANADRHAGN. Residues 415 to 441 are activation loop; it reads PIDHGYCLPENFEDCTFEWLYWPQAKL. An ATP-binding site is contributed by aspartate 417.

It belongs to the PI3/PI4-kinase family. Type II PI4K subfamily.

It is found in the membrane. The catalysed reaction is a 1,2-diacyl-sn-glycero-3-phospho-(1D-myo-inositol) + ATP = a 1,2-diacyl-sn-glycero-3-phospho-(1D-myo-inositol 4-phosphate) + ADP + H(+). The phosphorylation of phosphatidylinositol (PI) to PI4P is the first committed step in the generation of phosphatidylinositol 4,5-bisphosphate (PIP2), a precursor of the second messenger inositol 1,4,5-trisphosphate (InsP3). The sequence is that of Phosphatidylinositol 4-kinase gamma 2 (PI4KG2) from Arabidopsis thaliana (Mouse-ear cress).